The primary structure comprises 227 residues: Large ribosomal subunit protein uL3 (227 aa).

The residue at position 151 (Gln-151) is an N5-methylglutamine.

The protein belongs to the universal ribosomal protein uL3 family. Part of the 50S ribosomal subunit. Forms a cluster with proteins L14 and L19. In terms of processing, methylated by PrmB.

In terms of biological role, one of the primary rRNA binding proteins, it binds directly near the 3'-end of the 23S rRNA, where it nucleates assembly of the 50S subunit. This Gluconacetobacter diazotrophicus (strain ATCC 49037 / DSM 5601 / CCUG 37298 / CIP 103539 / LMG 7603 / PAl5) protein is Large ribosomal subunit protein uL3.